The sequence spans 249 residues: MSQNKNTICLFDVDDTLTKPRNAITNEMKELLASLRTKIKIGVVGGSNFNKIKEQLGENFINDFDYVFAENGLIAYKDGSLLEIQDIKKYLGEENIKKFINFVLHYVADLDIPIKRGTFVEFRNGMLNISPIGRNCSQQEREEFEKYDLEHKIRSTMVSILKEEFKSFGLQYSIGGQISFDVFPIGWDKTYCLRHLPEDEFKTLYFFGDKTFLGGNDYEIANHPRITQSFTVKSPANTLAILNDFFFKK.

Residue Asp-12 is the Nucleophile of the active site. Positions 12 and 14 each coordinate Mg(2+). Catalysis depends on Asp-14, which acts as the Proton donor/acceptor. Alpha-D-mannose 1-phosphate contacts are provided by Arg-21, Arg-123, Arg-134, Arg-141, Ser-179, and Asp-181. Asp-209 lines the Mg(2+) pocket.

The protein belongs to the eukaryotic PMM family. In terms of assembly, homodimer.

It localises to the cytoplasm. It carries out the reaction alpha-D-mannose 1-phosphate = D-mannose 6-phosphate. Its pathway is nucleotide-sugar biosynthesis; GDP-alpha-D-mannose biosynthesis; alpha-D-mannose 1-phosphate from D-fructose 6-phosphate: step 2/2. Involved in the synthesis of the GDP-mannose and dolichol-phosphate-mannose required for a number of critical mannosyl transfer reactions. In Dictyostelium discoideum (Social amoeba), this protein is Phosphomannomutase 2 (pmmB).